The following is a 503-amino-acid chain: Maturase K (503 aa).

This sequence belongs to the intron maturase 2 family. MatK subfamily.

Its subcellular location is the plastid. The protein resides in the chloroplast. In terms of biological role, usually encoded in the trnK tRNA gene intron. Probably assists in splicing its own and other chloroplast group II introns. This Backhousia myrtifolia (Grey myrtle) protein is Maturase K.